The sequence spans 204 residues: uncharacterized protein (204 aa).

The segment at 1 to 20 (MQNPLPEVMSPEHDKRTTTP) is disordered.

This is an uncharacterized protein from Frog virus 3 (isolate Goorha) (FV-3).